The sequence spans 156 residues: 6,7-dimethyl-8-ribityllumazine synthase (156 aa).

Residues Phe23, 57–59 (AYE), and 81–83 (AII) contribute to the 5-amino-6-(D-ribitylamino)uracil site. Residue 86-87 (GT) coordinates (2S)-2-hydroxy-3-oxobutyl phosphate. Residue His89 is the Proton donor of the active site. Position 114 (Phe114) interacts with 5-amino-6-(D-ribitylamino)uracil. Arg128 is a binding site for (2S)-2-hydroxy-3-oxobutyl phosphate.

This sequence belongs to the DMRL synthase family.

It carries out the reaction (2S)-2-hydroxy-3-oxobutyl phosphate + 5-amino-6-(D-ribitylamino)uracil = 6,7-dimethyl-8-(1-D-ribityl)lumazine + phosphate + 2 H2O + H(+). It participates in cofactor biosynthesis; riboflavin biosynthesis; riboflavin from 2-hydroxy-3-oxobutyl phosphate and 5-amino-6-(D-ribitylamino)uracil: step 1/2. Its function is as follows. Catalyzes the formation of 6,7-dimethyl-8-ribityllumazine by condensation of 5-amino-6-(D-ribitylamino)uracil with 3,4-dihydroxy-2-butanone 4-phosphate. This is the penultimate step in the biosynthesis of riboflavin. The chain is 6,7-dimethyl-8-ribityllumazine synthase from Helicobacter pylori (strain J99 / ATCC 700824) (Campylobacter pylori J99).